A 399-amino-acid polypeptide reads, in one-letter code: Salivary protein Tsal1 (399 aa).

The first 22 residues, 1–22 (MALKLVYGVFTLALLGISSVNA), serve as a signal peptide directing secretion. N-linked (GlcNAc...) asparagine glycosylation occurs at Asn268.

It belongs to the DNA/RNA non-specific endonuclease family. Requires a divalent metal cation as cofactor. In terms of tissue distribution, saliva (at protein level).

Its subcellular location is the secreted. Binds double-stranded DNA (dsDNA) with high affinity. Binds double-stranded RNA. Binds single-stranded DNA with lower affinity and with a preference for purine-rich sequences. Shows residual nuclease activity for dsDNA. May facilitate blood meal intake by lowering the local viscosity created by the release of host DNA. This chain is Salivary protein Tsal1, found in Glossina morsitans morsitans (Savannah tsetse fly).